We begin with the raw amino-acid sequence, 1437 residues long: FYVE and coiled-coil domain-containing protein 1 (1437 aa).

Alanine 2 is modified (N-acetylalanine). A coiled-coil region spans residues 4–30 (SSTETQLQRIIRDLQDAATELSHEFKE). Positions 36 to 169 (TDDSTSLHKF…VQFDLAPRGY (134 aa)) constitute an RUN domain. Serine 196 carries the post-translational modification Phosphoserine. Coiled coils occupy residues 223–270 (SLNN…VSRQ), 305–846 (SQAT…SEGA), and 873–1110 (ALTA…KDAL). The residue at position 372 (threonine 372) is a Phosphothreonine. Serine 837 is modified (phosphoserine). The segment at 1132-1190 (DMEVNHCHDCKREFSWIVRRHHCRICGRIFCYYCCNNYVVTKPSGKKERCCRACFQKFG) adopts an FYVE-type zinc-finger fold. The Zn(2+) site is built by cysteine 1138, cysteine 1141, cysteine 1154, cysteine 1157, cysteine 1162, cysteine 1165, cysteine 1182, and cysteine 1185. 2 disordered regions span residues 1191–1227 (EGSGSNDSSGSGTSQGEPSPMVSPAEASPQSIGSQGI) and 1253–1289 (SGSSLPETPTETDSMDPNTAEQDTTSNSLTPEDTEDV). The span at 1194-1206 (GSNDSSGSGTSQG) shows a compositional bias: low complexity. 2 stretches are compositionally biased toward polar residues: residues 1218 to 1227 (SPQSIGSQGI) and 1253 to 1283 (SGSSLPETPTETDSMDPNTAEQDTTSNSLTP). One can recognise a GOLD domain in the interval 1296-1425 (EICLLKSGEL…SKKVLYHLTV (130 aa)).

Can form homodimers. Interacts (via C-terminus) with MAP1LC3B. Interacts with RAB7A; the interaction with RAB7A induces FYCO1 recruitment to late endosomal/lysosomal compartments. In terms of tissue distribution, expressed in heart and testis. Expressed in the eye lens.

It is found in the cytoplasmic vesicle. The protein localises to the autophagosome. Its subcellular location is the endosome. It localises to the lysosome. Its function is as follows. May mediate microtubule plus end-directed vesicle transport. The protein is FYVE and coiled-coil domain-containing protein 1 (Fyco1) of Mus musculus (Mouse).